The sequence spans 218 residues: N-alpha-acetyltransferase 11 (218 aa).

The tract at residues 1 to 58 is interaction with NAA15; the sequence is MNIRNARPDDLMNMQHCNLLCLPENYQMKYYFYHGLSWPQLSYIAEDEDGKIVGYVLA. An N-acetyltransferase domain is found at 1–152; that stretch reads MNIRNARPDD…DAYAMKRDLS (152 aa). Residues 175-218 are disordered; that stretch reads EETQGGTLPDAGEACLPKNPTSKDSGSSDSTDVQDSSEDLDSIS. Residues 196–205 show a composition bias toward low complexity; it reads SKDSGSSDST. A compositionally biased stretch (acidic residues) spans 209 to 218; the sequence is DSSEDLDSIS.

This sequence belongs to the acetyltransferase family. ARD1 subfamily. In terms of assembly, component of the N-terminal acetyltransferase A (NatA) complex composed of NAA11 and NAA15. Interacts with HIF1A.

It localises to the cytoplasm. Its subcellular location is the nucleus. The catalysed reaction is N-terminal glycyl-[protein] + acetyl-CoA = N-terminal N(alpha)-acetylglycyl-[protein] + CoA + H(+). It carries out the reaction N-terminal L-alanyl-[protein] + acetyl-CoA = N-terminal N(alpha)-acetyl-L-alanyl-[protein] + CoA + H(+). It catalyses the reaction N-terminal L-seryl-[protein] + acetyl-CoA = N-terminal N(alpha)-acetyl-L-seryl-[protein] + CoA + H(+). The enzyme catalyses N-terminal L-valyl-[protein] + acetyl-CoA = N-terminal N(alpha)-acetyl-L-valyl-[protein] + CoA + H(+). The catalysed reaction is N-terminal L-cysteinyl-[protein] + acetyl-CoA = N-terminal N(alpha)-acetyl-L-cysteinyl-[protein] + CoA + H(+). It carries out the reaction N-terminal L-threonyl-[protein] + acetyl-CoA = N-terminal N(alpha)-acetyl-L-threonyl-[protein] + CoA + H(+). Functionally, displays alpha (N-terminal) acetyltransferase activity. Proposed alternative catalytic subunit of the N-terminal acetyltransferase A (NatA) complex. The polypeptide is N-alpha-acetyltransferase 11 (Naa11) (Mus musculus (Mouse)).